The sequence spans 30 residues: Kalata-B16 (30 aa).

Positions 1–30 (GIPCAESCVYIPCTITALLGCKCQDKVCYD) form a cross-link, cyclopeptide (Gly-Asp). Disulfide bonds link Cys-4–Cys-21, Cys-8–Cys-23, and Cys-13–Cys-28.

This is a cyclic peptide.

In terms of biological role, probably participates in a plant defense mechanism. The protein is Kalata-B16 of Oldenlandia affinis.